Consider the following 128-residue polypeptide: Disintegrin gabonin-1 (128 aa).

The signal sequence occupies residues 1 to 20; it reads MIQVLLVIICLAVFPYQGSS. A propeptide spanning residues 21–47 is cleaved from the precursor; sequence IILESGNVNDYEIVYPKKVTVLPTGAM. Residues 47–112 form the Disintegrin domain; sequence MNSAHPCCDP…DCPRNPNKGE (66 aa). 4 disulfides stabilise this stretch: C53–C76, C67–C73, C72–C97, and C85–C104. The Cell attachment site motif lies at 89-91; the sequence is RGD. The tract at residues 108 to 128 is disordered; it reads PNKGESDELEWSAAATGSVLM.

It belongs to the disintegrin family. Dimeric disintegrin subfamily. Heterodimer with bitisgabonin (bitisgabonin-1 is the name of the heterodimer); disulfide-linked. As to expression, expressed by the venom gland.

The protein localises to the secreted. Functionally, the heterodimer bitisgabonin-1 is a potent inhibitor of the adhesion of the RGD-dependent integrin alpha-5/beta-1 (ITGA5/ITGB1) to immobilized fibronectin. This Bitis gabonica (Gaboon adder) protein is Disintegrin gabonin-1.